Reading from the N-terminus, the 213-residue chain is Ras-related protein Rab-19 (213 aa).

The GTP site is built by Ser24, Val26, Gly27, Lys28, Thr29, Cys30, Asp42, and Thr47. Residue Thr29 coordinates Mg(2+). A Switch 1 motif is present at residues 37-52 (SGIFMDNQQNTIGVDF). Residues Thr47 and Asp70 each coordinate Mg(2+). The short motif at 72–87 (AGQERFRTITQSYYRS) is the Switch 2 element. Positions 73, 128, 129, 131, 159, 160, and 161 each coordinate GTP. Residues Cys211 and Cys213 are each lipidated (S-geranylgeranyl cysteine). At Cys213 the chain carries Cysteine methyl ester.

Belongs to the small GTPase superfamily. Rab family. Mg(2+) serves as cofactor.

It localises to the cell membrane. It catalyses the reaction GTP + H2O = GDP + phosphate + H(+). Its activity is regulated as follows. Regulated by guanine nucleotide exchange factors (GEFs) which promote the exchange of bound GDP for free GTP. Regulated by GTPase activating proteins (GAPs) which increase the GTP hydrolysis activity. Inhibited by GDP dissociation inhibitors (GDIs). Its function is as follows. The small GTPases Rab are key regulators of intracellular membrane trafficking, from the formation of transport vesicles to their fusion with membranes. Rabs cycle between an inactive GDP-bound form and an active GTP-bound form that is able to recruit to membranes different set of downstream effectors directly responsible for vesicle formation, movement, tethering and fusion. The polypeptide is Ras-related protein Rab-19 (rab19) (Xenopus laevis (African clawed frog)).